A 561-amino-acid polypeptide reads, in one-letter code: 65 kDa phosphoprotein (561 aa).

Disordered stretches follow at residues 389–475 (DEGA…SDNE) and 534–561 (AAQPKRRRHRQDALPGPCIASTPKKHRG). Acidic residues predominate over residues 395-411 (GDDDVWTSGSDSDEELV). Positions 440–449 (ASSATACTSG) are enriched in low complexity. Positions 464-473 (PEEDTDEDSD) are enriched in acidic residues. Ser472 bears the Phosphoserine mark. Positions 537–560 (PKRRRHRQDALPGPCIASTPKKHR) match the Bipartite nuclear localization signal motif.

The protein belongs to the herpesviridae pp65 family. Interacts with host NCL/nucleolin. Interacts with host IFI16. Interacts with host CGAS; this interaction inhibits CGAS enzymatic activity. Phosphorylation may play a role in the localization of the protein.

It is found in the virion tegument. Its subcellular location is the host nucleus. It localises to the host cytoplasm. In terms of biological role, counteracts the host antiviral immune response when activated and phosphorylated, by preventing host IRF3 from entering the nucleus. Also inhibits the type I interferon production by inactivating the enzymatic activity of DNA sensor CGAS without affecting STING1. Participates in the transactivation of viral major immediate-early genes by the recruitment of host IFI16 to the promoters pf these genes. This Human cytomegalovirus (strain AD169) (HHV-5) protein is 65 kDa phosphoprotein (UL83).